The sequence spans 422 residues: Cysteate synthase (422 aa).

Lysine 105 bears the N6-(pyridoxal phosphate)lysine mark. Pyridoxal 5'-phosphate-binding residues include asparagine 131 and threonine 379.

Belongs to the threonine synthase family. Cysteate synthase subfamily. In terms of assembly, homotrimer. The cofactor is pyridoxal 5'-phosphate.

The catalysed reaction is O-phospho-L-serine + sulfite + H(+) = L-cysteate + phosphate. It functions in the pathway cofactor biosynthesis; coenzyme M biosynthesis. Its function is as follows. Specifically catalyzes the beta-elimination of phosphate from L-phosphoserine and the beta-addition of sulfite to the dehydroalanine intermediate to produce L-cysteate. This is Cysteate synthase from Methanospirillum hungatei JF-1 (strain ATCC 27890 / DSM 864 / NBRC 100397 / JF-1).